We begin with the raw amino-acid sequence, 462 residues long: GTPase Der (462 aa).

EngA-type G domains follow at residues Lys9–Gln171 and Ile201–Ser372. GTP is bound by residues Gly15 to Ser22, Asp62 to Met66, Asn123 to Asp126, Gly207 to Ser214, Asp254 to Ile258, and Asn318 to Asp321. Residues Lys373–Lys457 form the KH-like domain.

The protein belongs to the TRAFAC class TrmE-Era-EngA-EngB-Septin-like GTPase superfamily. EngA (Der) GTPase family. Associates with the 50S ribosomal subunit.

GTPase that plays an essential role in the late steps of ribosome biogenesis. This chain is GTPase Der, found in Helicobacter pylori (strain P12).